The sequence spans 503 residues: Aminoaldehyde dehydrogenase 2, peroxisomal (503 aa).

Na(+) contacts are provided by isoleucine 28 and aspartate 99. Positions 161 and 185 each coordinate NAD(+). Leucine 189 contributes to the Na(+) binding site. Serine 239 serves as a coordination point for NAD(+). Glutamate 260 acts as the Proton acceptor in catalysis. Cysteine 294 (nucleophile) is an active-site residue. The Microbody targeting signal signature appears at alanine 501–leucine 503.

Belongs to the aldehyde dehydrogenase family. Forms homodimers.

The protein resides in the peroxisome. It carries out the reaction 3-aminopropanal + NAD(+) + H2O = beta-alanine + NADH + 2 H(+). The catalysed reaction is 4-aminobutanal + NAD(+) + H2O = 4-aminobutanoate + NADH + 2 H(+). It catalyses the reaction 4-guanidinobutanal + NAD(+) + H2O = 4-guanidinobutanoate + NADH + 2 H(+). It participates in amine and polyamine biosynthesis; betaine biosynthesis via choline pathway; betaine from betaine aldehyde: step 1/1. Dehydrogenase that catalyzes the oxidation of several aminoaldehydes. Metabolizes and detoxifies aldehyde products of polyamine degradation to non-toxic amino acids. Catalyzes the oxidation of 3-aminopropanal to beta-alanine. Catalyzes the oxidation of 4-aminobutanal to 4-aminobutanoate. Catalyzes the oxidation of 4-guanidinobutanal to 4-guanidinobutanoate. This Pisum sativum (Garden pea) protein is Aminoaldehyde dehydrogenase 2, peroxisomal.